A 402-amino-acid chain; its full sequence is Formate-dependent phosphoribosylglycinamide formyltransferase (402 aa).

N(1)-(5-phospho-beta-D-ribosyl)glycinamide is bound by residues 23–24 (EL) and Glu83. Residues Arg115, Lys156, 196-199 (EEFV), and Glu204 each bind ATP. In terms of domain architecture, ATP-grasp spans 120-316 (RLAAEKVGVP…EFAIHARAVL (197 aa)). Mg(2+)-binding residues include Glu274 and Glu287. Residues Asp294, Lys364, and 371-372 (RR) contribute to the N(1)-(5-phospho-beta-D-ribosyl)glycinamide site.

This sequence belongs to the PurK/PurT family. Homodimer.

The catalysed reaction is N(1)-(5-phospho-beta-D-ribosyl)glycinamide + formate + ATP = N(2)-formyl-N(1)-(5-phospho-beta-D-ribosyl)glycinamide + ADP + phosphate + H(+). It participates in purine metabolism; IMP biosynthesis via de novo pathway; N(2)-formyl-N(1)-(5-phospho-D-ribosyl)glycinamide from N(1)-(5-phospho-D-ribosyl)glycinamide (formate route): step 1/1. In terms of biological role, involved in the de novo purine biosynthesis. Catalyzes the transfer of formate to 5-phospho-ribosyl-glycinamide (GAR), producing 5-phospho-ribosyl-N-formylglycinamide (FGAR). Formate is provided by PurU via hydrolysis of 10-formyl-tetrahydrofolate. The polypeptide is Formate-dependent phosphoribosylglycinamide formyltransferase (Ignicoccus hospitalis (strain KIN4/I / DSM 18386 / JCM 14125)).